Consider the following 196-residue polypeptide: Nucleoside triphosphate pyrophosphatase (196 aa).

The active-site Proton acceptor is the Asp73.

This sequence belongs to the Maf family. Requires a divalent metal cation as cofactor.

It is found in the cytoplasm. The catalysed reaction is a ribonucleoside 5'-triphosphate + H2O = a ribonucleoside 5'-phosphate + diphosphate + H(+). The enzyme catalyses a 2'-deoxyribonucleoside 5'-triphosphate + H2O = a 2'-deoxyribonucleoside 5'-phosphate + diphosphate + H(+). Nucleoside triphosphate pyrophosphatase. May have a dual role in cell division arrest and in preventing the incorporation of modified nucleotides into cellular nucleic acids. This is Nucleoside triphosphate pyrophosphatase from Anaplasma marginale (strain Florida).